Consider the following 472-residue polypeptide: MAGSGWGLPRLDGFILTERLGSGTYATVYKAYAKKATREVVAIKCVAKKSLNKASVENLLTEIEILKGIRHPHIVQLKDFQWDNDNIYLIMEFCAGGDLSRFIHTRRILPEKVARVFMQQLASALQFLHERNISHLDLKPQNILLSSLEKPHLKLADFGFAQHMSPWDEKHVLRGSPLYMAPEMVCRRQYDARVDLWSVGVILYEALFGQPPFASRSFSELEEKIRSNRVIELPLRPQLSLDCRDLLQRLLERDPSHRISFQDFFAHPWVDLEHMPSGESLAQATALVVEAVKKDQEGDAAAALSLYCKALDFFVPALHYEVDAQRKEAIKAKVGQYVSRAEELKAIVSSSNQALLRQGTTGQELLREMARDKPRLLAALEVASAAMAKEEEAGKEQDALDLYQHSLGELLLLLAAEAPGRRRELLHTEVQNLMARAEYLKEQIKIRESHWEAESLDKEGLSESVRSSCTLQ.

Residues 14 to 270 (FILTERLGSG…FQDFFAHPWV (257 aa)) form the Protein kinase domain. ATP-binding positions include 20–28 (LGSGTYATV) and Lys-44. Asp-137 acts as the Proton acceptor in catalysis. Position 176 is a phosphoserine (Ser-176). The 67-residue stretch at 281-347 (LAQATALVVE…VSRAEELKAI (67 aa)) folds into the MIT 1 domain. Residues Ser-350 and Ser-384 each carry the phosphoserine; by autocatalysis modification. The MIT 2 domain maps to 376–444 (LLAALEVASA…ARAEYLKEQI (69 aa)). A Phosphoserine modification is found at Ser-464.

The protein belongs to the protein kinase superfamily. Ser/Thr protein kinase family. APG1/unc-51/ULK1 subfamily. Interacts (via protein kinase domain) with SUFU. Post-translationally, autophosphorylated. Autophosphorylation is blocked by interaction with SUFU.

The protein resides in the cytoplasm. The catalysed reaction is L-seryl-[protein] + ATP = O-phospho-L-seryl-[protein] + ADP + H(+). It catalyses the reaction L-threonyl-[protein] + ATP = O-phospho-L-threonyl-[protein] + ADP + H(+). In terms of biological role, serine/threonine protein kinase that acts as a regulator of Sonic hedgehog (SHH) signaling and autophagy. Acts as a negative regulator of SHH signaling in the absence of SHH ligand: interacts with SUFU, thereby inactivating the protein kinase activity and preventing phosphorylation of GLI proteins (GLI1, GLI2 and/or GLI3). Positively regulates SHH signaling in the presence of SHH: dissociates from SUFU, autophosphorylates and mediates phosphorylation of GLI2, activating it and promoting its nuclear translocation. Phosphorylates in vitro GLI2, as well as GLI1 and GLI3, although less efficiently. Also acts as a regulator of autophagy: following cellular senescence, able to induce autophagy. This Rattus norvegicus (Rat) protein is Serine/threonine-protein kinase ULK3 (Ulk3).